Here is a 447-residue protein sequence, read N- to C-terminus: Polyamine export protein (447 aa).

Topologically, residues 1–4 (MLNS) are cytoplasmic. A CNNM transmembrane domain is found at 1-197 (MLNSIFIIFC…ALAGVLRKQE (197 aa)). Residues 5–25 (IFIIFCLIAVSAFFSISEISL) form a helical membrane-spanning segment. The Periplasmic portion of the chain corresponds to 26–54 (AASRKIKLKLLADEGSINAQRVLKMQENP). A helical transmembrane segment spans residues 55–75 (GMFFTVVQIGLNAVAILGGIV). Over 76–99 (GDAAFSPAFSALFSHYMSPELSEQ) the chain is Cytoplasmic. A helical membrane pass occupies residues 100 to 120 (LSFILSFSLVTGLFILFADLT). The Periplasmic segment spans residues 121-141 (PKRIGMIAPEAVALRIINPMR). A helical membrane pass occupies residues 142 to 162 (FCLFVFRPLVWLFNGMANNIF). Topologically, residues 163-447 (RLFKIPMVRK…DAQGKEDSAA (285 aa)) are cytoplasmic. 2 CBS domains span residues 216-275 (MTSR…NQSM) and 282-343 (QIRN…GLEE).

It belongs to the UPF0053 family. PaeA subfamily.

It localises to the cell inner membrane. In terms of biological role, involved in cadaverine and putrescine tolerance in stationary phase. May facilitate the efflux of both cadaverine and putrescine from the cytoplasm, reducing potentially toxic levels under certain stress conditions. The polypeptide is Polyamine export protein (Salmonella typhimurium (strain 14028s / SGSC 2262)).